The following is a 238-amino-acid chain: Uridylate kinase (238 aa).

12-15 serves as a coordination point for ATP; sequence KLSG. Residue G54 coordinates UMP. ATP is bound by residues G55 and R59. UMP is bound by residues D74 and 135–142; that span reads TGNPFFTT. The ATP site is built by T162, Y168, and D171.

The protein belongs to the UMP kinase family. Homohexamer.

Its subcellular location is the cytoplasm. The catalysed reaction is UMP + ATP = UDP + ADP. Its pathway is pyrimidine metabolism; CTP biosynthesis via de novo pathway; UDP from UMP (UMPK route): step 1/1. With respect to regulation, inhibited by UTP. In terms of biological role, catalyzes the reversible phosphorylation of UMP to UDP. This is Uridylate kinase from Bordetella pertussis (strain Tohama I / ATCC BAA-589 / NCTC 13251).